Here is a 472-residue protein sequence, read N- to C-terminus: Cell division protein FtsP (472 aa).

Residues 1–27 (MSLSRRQFIQASGIALCAGAMPLTARA) constitute a signal peptide (tat-type signal).

The protein belongs to the FtsP family. Post-translationally, predicted to be exported by the Tat system. The position of the signal peptide cleavage has not been experimentally proven.

Its subcellular location is the periplasm. Its function is as follows. Cell division protein that is required for growth during stress conditions. May be involved in protecting or stabilizing the divisomal assembly under conditions of stress. In Dickeya dadantii (strain 3937) (Erwinia chrysanthemi (strain 3937)), this protein is Cell division protein FtsP.